Consider the following 360-residue polypeptide: GTPase Obg (360 aa).

The region spanning 1–156 (MFVDSVEIII…KCVRLELKLI (156 aa)) is the Obg domain. Positions 157-360 (ADIGLVGFPN…LKFVLLKALQ (204 aa)) constitute an OBG-type G domain. Residues 163–170 (GFPNAGKS), 188–192 (FTTLV), 210–213 (DIPG), 279–282 (NKCD), and 341–343 (SAV) each bind GTP. 2 residues coordinate Mg(2+): serine 170 and threonine 190.

The protein belongs to the TRAFAC class OBG-HflX-like GTPase superfamily. OBG GTPase family. In terms of assembly, monomer. It depends on Mg(2+) as a cofactor.

It localises to the cytoplasm. In terms of biological role, an essential GTPase which binds GTP, GDP and possibly (p)ppGpp with moderate affinity, with high nucleotide exchange rates and a fairly low GTP hydrolysis rate. Plays a role in control of the cell cycle, stress response, ribosome biogenesis and in those bacteria that undergo differentiation, in morphogenesis control. The polypeptide is GTPase Obg (Helicobacter pylori (strain P12)).